A 262-amino-acid chain; its full sequence is Acyl-[acyl-carrier-protein]--UDP-N-acetylglucosamine O-acyltransferase (262 aa).

This sequence belongs to the transferase hexapeptide repeat family. LpxA subfamily. Homotrimer.

It localises to the cytoplasm. It carries out the reaction a (3R)-hydroxyacyl-[ACP] + UDP-N-acetyl-alpha-D-glucosamine = a UDP-3-O-[(3R)-3-hydroxyacyl]-N-acetyl-alpha-D-glucosamine + holo-[ACP]. Its pathway is glycolipid biosynthesis; lipid IV(A) biosynthesis; lipid IV(A) from (3R)-3-hydroxytetradecanoyl-[acyl-carrier-protein] and UDP-N-acetyl-alpha-D-glucosamine: step 1/6. Functionally, involved in the biosynthesis of lipid A, a phosphorylated glycolipid that anchors the lipopolysaccharide to the outer membrane of the cell. The chain is Acyl-[acyl-carrier-protein]--UDP-N-acetylglucosamine O-acyltransferase from Salmonella schwarzengrund (strain CVM19633).